We begin with the raw amino-acid sequence, 224 residues long: Uridylate kinase (224 aa).

Gly9–Ser10 serves as a coordination point for ATP. A UMP-binding site is contributed by Gly43. The ATP site is built by Gly44 and Arg48. UMP is bound by residues Asp65 and Thr113–Thr119. 3 residues coordinate ATP: Thr139, Tyr145, and Asp148.

The protein belongs to the UMP kinase family. Homohexamer.

The protein localises to the cytoplasm. The catalysed reaction is UMP + ATP = UDP + ADP. It functions in the pathway pyrimidine metabolism; CTP biosynthesis via de novo pathway; UDP from UMP (UMPK route): step 1/1. Its activity is regulated as follows. Inhibited by UTP. In terms of biological role, catalyzes the reversible phosphorylation of UMP to UDP. This Methanothermobacter thermautotrophicus (strain ATCC 29096 / DSM 1053 / JCM 10044 / NBRC 100330 / Delta H) (Methanobacterium thermoautotrophicum) protein is Uridylate kinase.